A 407-amino-acid chain; its full sequence is UDP-N-acetyl-D-mannosamine dehydrogenase (407 aa).

The protein belongs to the UDP-glucose/GDP-mannose dehydrogenase family.

It carries out the reaction UDP-N-acetyl-alpha-D-mannosamine + 2 NAD(+) + H2O = UDP-N-acetyl-alpha-D-mannosaminouronate + 2 NADH + 3 H(+). The protein operates within capsule biogenesis; capsule polysaccharide biosynthesis. Functionally, dehydrogenase involved in the biosynthesis of capsular polysaccharides. Catalyzes the NAD(+)-dependent oxidation of UDP-N-acetyl-D-mannosamine (UDP-ManNAc) to UDP-N-acetyl-D-mannosaminuronic acid (UDP-ManNAcA). The sequence is that of UDP-N-acetyl-D-mannosamine dehydrogenase from Campylobacter jejuni.